A 151-amino-acid chain; its full sequence is MKVILRKDVATLGDAGDVVIVKNGYANNYLIPQSIAIRATEGTLKALETERKQQARKVEMQRKHAREQAQKIEQLALKVFARAGESGKLFGTVTSADIAEALKAQGFEIDRRKITIEAPIKALGKFEAAVKLFSDVTVAVQFEVEAEGMEA.

Belongs to the bacterial ribosomal protein bL9 family.

In terms of biological role, binds to the 23S rRNA. This chain is Large ribosomal subunit protein bL9, found in Chlorobium chlorochromatii (strain CaD3).